The sequence spans 83 residues: MSGSTGERSFADIITSIRYWVIHSITIPSLFIAGWLFVSTGLAYDVFGSPRPNEYFTENRQGIPLITGRFDSLEQLDEFSRSF.

Residues 21-35 (VIHSITIPSLFIAGW) form a helical membrane-spanning segment. His-23 provides a ligand contact to heme.

It belongs to the PsbE/PsbF family. As to quaternary structure, heterodimer of an alpha subunit and a beta subunit. PSII is composed of 1 copy each of membrane proteins PsbA, PsbB, PsbC, PsbD, PsbE, PsbF, PsbH, PsbI, PsbJ, PsbK, PsbL, PsbM, PsbT, PsbX, PsbY, PsbZ, Psb30/Ycf12, at least 3 peripheral proteins of the oxygen-evolving complex and a large number of cofactors. It forms dimeric complexes. Heme b is required as a cofactor.

It is found in the plastid. Its subcellular location is the chloroplast thylakoid membrane. Functionally, this b-type cytochrome is tightly associated with the reaction center of photosystem II (PSII). PSII is a light-driven water:plastoquinone oxidoreductase that uses light energy to abstract electrons from H(2)O, generating O(2) and a proton gradient subsequently used for ATP formation. It consists of a core antenna complex that captures photons, and an electron transfer chain that converts photonic excitation into a charge separation. The polypeptide is Cytochrome b559 subunit alpha (Helianthus annuus (Common sunflower)).